Consider the following 148-residue polypeptide: Ferredoxin-thioredoxin reductase catalytic chain, chloroplastic (148 aa).

The N-terminal 35 residues, 1–35, are a transit peptide targeting the chloroplast; that stretch reads MKALQASTSYSFFSKSSSATLQRRTHRPQCVILSK. C87 is a [4Fe-4S] cluster binding site. The Nucleophile role is filled by C89. A disulfide bridge links C89 with C119. C106, C108, and C117 together coordinate [4Fe-4S] cluster.

Belongs to the ferredoxin thioredoxin reductase beta subunit family. In terms of assembly, heterodimer of subunit A (variable subunit) and subunit B (catalytic subunit). Heterodimeric FTR forms a complex with ferredoxin and thioredoxin. The cofactor is [4Fe-4S] cluster.

Its subcellular location is the plastid. It localises to the chloroplast. The catalysed reaction is [thioredoxin]-disulfide + 2 reduced [2Fe-2S]-[ferredoxin] + 2 H(+) = [thioredoxin]-dithiol + 2 oxidized [2Fe-2S]-[ferredoxin]. Functionally, catalytic subunit of the ferredoxin-thioredoxin reductase (FTR), which catalyzes the two-electron reduction of thioredoxins by the electrons provided by reduced ferredoxin. The polypeptide is Ferredoxin-thioredoxin reductase catalytic chain, chloroplastic (Spinacia oleracea (Spinach)).